The following is a 146-amino-acid chain: Small ribosomal subunit protein uS5 (146 aa).

Residues 8–71 (FSEVVVNIGR…DDAFKNIIKV (64 aa)) form the S5 DRBM domain.

The protein belongs to the universal ribosomal protein uS5 family. As to quaternary structure, part of the 30S ribosomal subunit. Contacts proteins S4 and S8.

With S4 and S12 plays an important role in translational accuracy. Functionally, located at the back of the 30S subunit body where it stabilizes the conformation of the head with respect to the body. The chain is Small ribosomal subunit protein uS5 from Helicobacter hepaticus (strain ATCC 51449 / 3B1).